A 268-amino-acid polypeptide reads, in one-letter code: Eukaryotic translation initiation factor 2 subunit beta (268 aa).

Basic and acidic residues predominate over residues 1–12 (MADEINEIREEQ). The segment at 1 to 85 (MADEINEIRE…LNNESVDAGE (85 aa)) is disordered. An N-acetylalanine modification is found at Ala-2. Residues Ser-42, Ser-80, and Ser-112 each carry the phosphoserine; by CK2 modification. The segment at 222-246 (CLGCKSPDTILSKENRLFFLRCEKC) adopts a C4-type zinc-finger fold.

Belongs to the eIF-2-beta/eIF-5 family. In terms of assembly, eukaryotic translation initiation factor 2 eIF2 is a heterotrimeric complex composed of an alpha, a beta and a gamma subunit. Post-translationally, phosphorylated at Ser-42, Ser-80 and Ser-112 by CK2.

The protein localises to the cytoplasm. Its subcellular location is the cytosol. Functionally, component of the eIF2 complex that functions in the early steps of protein synthesis by forming a ternary complex with GTP and initiator tRNA. This complex binds to a 40S ribosomal subunit, followed by mRNA binding to form a 43S pre-initiation complex (43S PIC). Junction of the 60S ribosomal subunit to form the 80S initiation complex is preceded by hydrolysis of the GTP bound to eIF2 and release of an eIF2-GDP binary complex. In order for eIF2 to recycle and catalyze another round of initiation, the GDP bound to eIF2 must exchange with GTP by way of a reaction catalyzed by eIF2B. This is Eukaryotic translation initiation factor 2 subunit beta from Arabidopsis thaliana (Mouse-ear cress).